The primary structure comprises 507 residues: Maturase K (507 aa).

This sequence belongs to the intron maturase 2 family. MatK subfamily.

It localises to the plastid. It is found in the chloroplast. Functionally, usually encoded in the trnK tRNA gene intron. Probably assists in splicing its own and other chloroplast group II introns. In Liriodendron chinense (Chinese tulip tree), this protein is Maturase K.